A 392-amino-acid polypeptide reads, in one-letter code: Tryptophan synthase beta chain (392 aa).

An N6-(pyridoxal phosphate)lysine modification is found at Lys-86.

It belongs to the TrpB family. As to quaternary structure, tetramer of two alpha and two beta chains. It depends on pyridoxal 5'-phosphate as a cofactor.

It catalyses the reaction (1S,2R)-1-C-(indol-3-yl)glycerol 3-phosphate + L-serine = D-glyceraldehyde 3-phosphate + L-tryptophan + H2O. It functions in the pathway amino-acid biosynthesis; L-tryptophan biosynthesis; L-tryptophan from chorismate: step 5/5. The beta subunit is responsible for the synthesis of L-tryptophan from indole and L-serine. In Buchnera aphidicola subsp. Schlechtendalia chinensis, this protein is Tryptophan synthase beta chain (trpB).